Reading from the N-terminus, the 483-residue chain is Aspartyl/glutamyl-tRNA(Asn/Gln) amidotransferase subunit B (483 aa).

This sequence belongs to the GatB/GatE family. GatB subfamily. Heterotrimer of A, B and C subunits.

It catalyses the reaction L-glutamyl-tRNA(Gln) + L-glutamine + ATP + H2O = L-glutaminyl-tRNA(Gln) + L-glutamate + ADP + phosphate + H(+). The catalysed reaction is L-aspartyl-tRNA(Asn) + L-glutamine + ATP + H2O = L-asparaginyl-tRNA(Asn) + L-glutamate + ADP + phosphate + 2 H(+). In terms of biological role, allows the formation of correctly charged Asn-tRNA(Asn) or Gln-tRNA(Gln) through the transamidation of misacylated Asp-tRNA(Asn) or Glu-tRNA(Gln) in organisms which lack either or both of asparaginyl-tRNA or glutaminyl-tRNA synthetases. The reaction takes place in the presence of glutamine and ATP through an activated phospho-Asp-tRNA(Asn) or phospho-Glu-tRNA(Gln). In Roseiflexus castenholzii (strain DSM 13941 / HLO8), this protein is Aspartyl/glutamyl-tRNA(Asn/Gln) amidotransferase subunit B.